We begin with the raw amino-acid sequence, 485 residues long: MKVTQEKLPASQISLEIEISPEMSKNAYEQIIKKYIRSANIPGFRKGKVPRNILIQRLGKNYIKAMALDDLINNCLEKAREQESIKAIGQFELKTEFEELVKDFEPGKEMAFSAKVDVEPEAKVEDYKGFLVQAEEAKYDSALVDEFLEERRSRMGTLIPIEGRAAEMGDVAIVDFVGIIPSETEGEEAQEVPGGKAQDFQMDLKEGQFIPGFIEGIVGMKLQETKEISAQFPSEYSEANLAGKPVVFTVTLKELKEKELPELDDDLAQEISEFETIDKLREFLEQKFTKEKEEKTKQNKEKAIIDELVTHLEVEIPETLIKNEVQQMLAQSAMDLSQYGIDVKEFFSSEKLPEMQERTRPEAIERLKRDLVIATVAKRESITVDEEEIKAESQKVVKQLKEKDFDSDRLRQVVTQELLKEKTIKWLEANGTVELVPEGTLHTESQTPQTTEILETEVESEIPQASETIVEVKAEEVATVENSQE.

Residues Gly169–Pro261 form the PPIase FKBP-type domain.

The protein belongs to the FKBP-type PPIase family. Tig subfamily.

Its subcellular location is the cytoplasm. The catalysed reaction is [protein]-peptidylproline (omega=180) = [protein]-peptidylproline (omega=0). Involved in protein export. Acts as a chaperone by maintaining the newly synthesized protein in an open conformation. Functions as a peptidyl-prolyl cis-trans isomerase. The polypeptide is Trigger factor (Trichodesmium erythraeum (strain IMS101)).